A 510-amino-acid chain; its full sequence is UDP-N-acetylmuramoyl-tripeptide--D-alanyl-D-alanine ligase (510 aa).

136-142 (GSSGKTS) is an ATP binding site.

It belongs to the MurCDEF family. MurF subfamily.

It is found in the cytoplasm. The catalysed reaction is D-alanyl-D-alanine + UDP-N-acetyl-alpha-D-muramoyl-L-alanyl-gamma-D-glutamyl-meso-2,6-diaminopimelate + ATP = UDP-N-acetyl-alpha-D-muramoyl-L-alanyl-gamma-D-glutamyl-meso-2,6-diaminopimeloyl-D-alanyl-D-alanine + ADP + phosphate + H(+). It functions in the pathway cell wall biogenesis; peptidoglycan biosynthesis. In terms of biological role, involved in cell wall formation. Catalyzes the final step in the synthesis of UDP-N-acetylmuramoyl-pentapeptide, the precursor of murein. The chain is UDP-N-acetylmuramoyl-tripeptide--D-alanyl-D-alanine ligase from Mycobacterium tuberculosis (strain CDC 1551 / Oshkosh).